We begin with the raw amino-acid sequence, 92 residues long: Protein AC152 (92 aa).

Acts as a transactivator of AC102 and HE65 genes. Therefore, participates in the global recruitment of G-actin to the host nucleus. The chain is Protein AC152 (AC152) from Autographa californica nuclear polyhedrosis virus (AcMNPV).